The following is a 92-amino-acid chain: Small ribosomal subunit protein uS19 (92 aa).

It belongs to the universal ribosomal protein uS19 family.

Functionally, protein S19 forms a complex with S13 that binds strongly to the 16S ribosomal RNA. This Agrobacterium fabrum (strain C58 / ATCC 33970) (Agrobacterium tumefaciens (strain C58)) protein is Small ribosomal subunit protein uS19.